A 152-amino-acid polypeptide reads, in one-letter code: Acidic phospholipase A2 (152 aa).

The first 21 residues, 1–21 (MNPAHLLVLSAVCVSLLGASS), serve as a signal peptide directing secretion. A propeptide spanning residues 22–27 (IPPQPL) is cleaved from the precursor. 7 disulfide bridges follow: C38–C104, C54–C151, C56–C72, C71–C132, C78–C125, C88–C118, and C111–C123. Residues Y55, G57, and G59 each contribute to the Ca(2+) site. H75 is an active-site residue. Residue D76 participates in Ca(2+) binding. D126 is an active-site residue.

Belongs to the phospholipase A2 family. Group I subfamily. D49 sub-subfamily. Ca(2+) serves as cofactor. Expressed by the venom gland.

Its subcellular location is the secreted. It carries out the reaction a 1,2-diacyl-sn-glycero-3-phosphocholine + H2O = a 1-acyl-sn-glycero-3-phosphocholine + a fatty acid + H(+). PLA2 catalyzes the calcium-dependent hydrolysis of the 2-acyl groups in 3-sn-phosphoglycerides. This Ophiophagus hannah (King cobra) protein is Acidic phospholipase A2.